Consider the following 471-residue polypeptide: DENN domain-containing protein 2D (471 aa).

One can recognise a uDENN domain in the interval 55 to 204; the sequence is EYLLVVSLKK…AFPAPGKTVT (150 aa). Residues 226 to 359 enclose the cDENN domain; that stretch reads HLEHVDFSSL…LQDDILDSLG (134 aa). The dDENN domain occupies 361 to 445; the sequence is GINELKTAEQ…QEAEKSKNPP (85 aa).

In terms of tissue distribution, in bronchial mucosa, mainly expressed in ciliated and basal epithelial cells and weakly in alveolar cells (at protein level). Tends to be down-regulated in lung cancers, immortalized bronchial epithelial cell lines and precancerous lesions.

It is found in the cytoplasm. In terms of biological role, guanine nucleotide exchange factor (GEF) which may activate RAB9A and RAB9B. Promotes the exchange of GDP to GTP, converting inactive GDP-bound Rab proteins into their active GTP-bound form. The chain is DENN domain-containing protein 2D (DENND2D) from Homo sapiens (Human).